The following is a 235-amino-acid chain: Large ribosomal subunit protein uL1 (235 aa).

It belongs to the universal ribosomal protein uL1 family. As to quaternary structure, part of the 50S ribosomal subunit.

In terms of biological role, binds directly to 23S rRNA. The L1 stalk is quite mobile in the ribosome, and is involved in E site tRNA release. Protein L1 is also a translational repressor protein, it controls the translation of the L11 operon by binding to its mRNA. The polypeptide is Large ribosomal subunit protein uL1 (Solidesulfovibrio magneticus (strain ATCC 700980 / DSM 13731 / RS-1) (Desulfovibrio magneticus)).